The following is a 69-amino-acid chain: DNA-directed RNA polymerase subunit omega (69 aa).

The protein belongs to the RNA polymerase subunit omega family. As to quaternary structure, the RNAP catalytic core consists of 2 alpha, 1 beta, 1 beta' and 1 omega subunit. When a sigma factor is associated with the core the holoenzyme is formed, which can initiate transcription.

It catalyses the reaction RNA(n) + a ribonucleoside 5'-triphosphate = RNA(n+1) + diphosphate. Promotes RNA polymerase assembly. Latches the N- and C-terminal regions of the beta' subunit thereby facilitating its interaction with the beta and alpha subunits. The chain is DNA-directed RNA polymerase subunit omega from Symbiobacterium thermophilum (strain DSM 24528 / JCM 14929 / IAM 14863 / T).